The following is a 167-amino-acid chain: Phosphopantetheine adenylyltransferase (167 aa).

A substrate-binding site is contributed by threonine 10. Residues 10–11 and histidine 18 each bind ATP; that span reads TF. Residues lysine 42, leucine 75, and arginine 89 each contribute to the substrate site. Residues 90–92, glutamate 100, and 125–131 contribute to the ATP site; these read GVR and YTYVASS.

This sequence belongs to the bacterial CoaD family. Homohexamer. Mg(2+) is required as a cofactor.

The protein localises to the cytoplasm. The catalysed reaction is (R)-4'-phosphopantetheine + ATP + H(+) = 3'-dephospho-CoA + diphosphate. It functions in the pathway cofactor biosynthesis; coenzyme A biosynthesis; CoA from (R)-pantothenate: step 4/5. Functionally, reversibly transfers an adenylyl group from ATP to 4'-phosphopantetheine, yielding dephospho-CoA (dPCoA) and pyrophosphate. The sequence is that of Phosphopantetheine adenylyltransferase from Chlorobium phaeobacteroides (strain DSM 266 / SMG 266 / 2430).